We begin with the raw amino-acid sequence, 192 residues long: Guanylate kinase (192 aa).

In terms of domain architecture, Guanylate kinase-like spans 7 to 185 (GLIIILSSPS…TLKKIHEIIV (179 aa)). Residue 14–21 (SPSGTGKS) participates in ATP binding.

The protein belongs to the guanylate kinase family.

The protein localises to the cytoplasm. The catalysed reaction is GMP + ATP = GDP + ADP. In terms of biological role, essential for recycling GMP and indirectly, cGMP. The protein is Guanylate kinase of Rickettsia felis (strain ATCC VR-1525 / URRWXCal2) (Rickettsia azadi).